Here is a 445-residue protein sequence, read N- to C-terminus: Cyclin-B1-2 (445 aa).

It belongs to the cyclin family. Cyclin AB subfamily. As to quaternary structure, interacts with FZR2/CCS52A1, FZR1/CCS52A2 and FZR3/CCS52B. Expressed in roots, stems and flowers.

Its function is as follows. May induce mitotic cell division. This is Cyclin-B1-2 (CYCB1-2) from Arabidopsis thaliana (Mouse-ear cress).